The primary structure comprises 331 residues: 6-phosphogluconolactonase (331 aa).

The protein belongs to the cycloisomerase 2 family.

It catalyses the reaction 6-phospho-D-glucono-1,5-lactone + H2O = 6-phospho-D-gluconate + H(+). It participates in carbohydrate degradation; pentose phosphate pathway; D-ribulose 5-phosphate from D-glucose 6-phosphate (oxidative stage): step 2/3. Catalyzes the hydrolysis of 6-phosphogluconolactone to 6-phosphogluconate. The chain is 6-phosphogluconolactonase from Sodalis glossinidius (strain morsitans).